A 216-amino-acid polypeptide reads, in one-letter code: Octanoyltransferase (216 aa).

Residues 33-212 (AHTPDELWLV…ILSNILGLTA (180 aa)) form the BPL/LPL catalytic domain. Substrate-binding positions include 72 to 79 (RGGQVTYH), 139 to 141 (SLG), and 152 to 154 (GVA). The active-site Acyl-thioester intermediate is C170.

This sequence belongs to the LipB family.

Its subcellular location is the cytoplasm. It carries out the reaction octanoyl-[ACP] + L-lysyl-[protein] = N(6)-octanoyl-L-lysyl-[protein] + holo-[ACP] + H(+). The protein operates within protein modification; protein lipoylation via endogenous pathway; protein N(6)-(lipoyl)lysine from octanoyl-[acyl-carrier-protein]: step 1/2. Functionally, catalyzes the transfer of endogenously produced octanoic acid from octanoyl-acyl-carrier-protein onto the lipoyl domains of lipoate-dependent enzymes. Lipoyl-ACP can also act as a substrate although octanoyl-ACP is likely to be the physiological substrate. The sequence is that of Octanoyltransferase from Saccharophagus degradans (strain 2-40 / ATCC 43961 / DSM 17024).